A 274-amino-acid chain; its full sequence is NH(3)-dependent NAD(+) synthetase (274 aa).

46–53 (GISGGQDS) contributes to the ATP binding site. Aspartate 52 contacts Mg(2+). Arginine 140 serves as a coordination point for deamido-NAD(+). Threonine 160 provides a ligand contact to ATP. Glutamate 165 is a binding site for Mg(2+). Deamido-NAD(+)-binding residues include lysine 173 and aspartate 180. The ATP site is built by lysine 189 and threonine 211. Deamido-NAD(+) is bound at residue 260-261 (HK).

It belongs to the NAD synthetase family. As to quaternary structure, homodimer.

The catalysed reaction is deamido-NAD(+) + NH4(+) + ATP = AMP + diphosphate + NAD(+) + H(+). The protein operates within cofactor biosynthesis; NAD(+) biosynthesis; NAD(+) from deamido-NAD(+) (ammonia route): step 1/1. In terms of biological role, catalyzes the ATP-dependent amidation of deamido-NAD to form NAD. Uses ammonia as a nitrogen source. The chain is NH(3)-dependent NAD(+) synthetase from Lactococcus lactis subsp. cremoris (strain MG1363).